The primary structure comprises 450 residues: MKKVFVKTYGCQMNEYDSDKMVDVLNASQGLEPTDNVEEADVILFNTCSVREKAQEKVFSELGRMKALKAVKPDLVIGVGGCVASQEGASIVSRAPYVDVVFGPQTLHRLPDLIARRQRTGQSQVDISFPEIEKFDHLPPARVEGPSAFVSIMEGCSKYCSYCVVPYTRGEEVSRPFEDVLAEVAGLAEQGVREVTLLGQNVNAYRGKMGDTTEIADFALLIEYVAEIPGIERIRYTTSHPKEFTSRLVELYGRCDKLVNHLHLPVQHASDRILMAMKRGYSVLEYKSIIRKLRVLRPDMSMSSDFIVGFPGETDADFEKLMAMIEEIGYDTSFSFIFSPRPGTPAANLHDDTPHEVKLRRLQRLQATIEENVQRISQNMVGTVQRILVEGPARKDPTELHGRTENNRVVNFALPGVPQAGRDRLVGQLVDVSITQAFPHSLRGEIVVRQ.

In terms of domain architecture, MTTase N-terminal spans 2 to 119 (KKVFVKTYGC…LPDLIARRQR (118 aa)). The [4Fe-4S] cluster site is built by Cys-11, Cys-48, Cys-82, Cys-156, Cys-160, and Cys-163. Residues 142-375 (RVEGPSAFVS…QATIEENVQR (234 aa)) enclose the Radical SAM core domain. Residues 378–448 (QNMVGTVQRI…PHSLRGEIVV (71 aa)) enclose the TRAM domain.

This sequence belongs to the methylthiotransferase family. MiaB subfamily. Monomer. [4Fe-4S] cluster is required as a cofactor.

It is found in the cytoplasm. It catalyses the reaction N(6)-dimethylallyladenosine(37) in tRNA + (sulfur carrier)-SH + AH2 + 2 S-adenosyl-L-methionine = 2-methylsulfanyl-N(6)-dimethylallyladenosine(37) in tRNA + (sulfur carrier)-H + 5'-deoxyadenosine + L-methionine + A + S-adenosyl-L-homocysteine + 2 H(+). In terms of biological role, catalyzes the methylthiolation of N6-(dimethylallyl)adenosine (i(6)A), leading to the formation of 2-methylthio-N6-(dimethylallyl)adenosine (ms(2)i(6)A) at position 37 in tRNAs that read codons beginning with uridine. This Cupriavidus necator (strain ATCC 17699 / DSM 428 / KCTC 22496 / NCIMB 10442 / H16 / Stanier 337) (Ralstonia eutropha) protein is tRNA-2-methylthio-N(6)-dimethylallyladenosine synthase.